Here is a 507-residue protein sequence, read N- to C-terminus: ATP synthase subunit alpha, chloroplastic (507 aa).

Residue 170–177 participates in ATP binding; that stretch reads GDRQTGKT.

This sequence belongs to the ATPase alpha/beta chains family. F-type ATPases have 2 components, CF(1) - the catalytic core - and CF(0) - the membrane proton channel. CF(1) has five subunits: alpha(3), beta(3), gamma(1), delta(1), epsilon(1). CF(0) has four main subunits: a, b, b' and c.

Its subcellular location is the plastid. It localises to the chloroplast thylakoid membrane. It carries out the reaction ATP + H2O + 4 H(+)(in) = ADP + phosphate + 5 H(+)(out). In terms of biological role, produces ATP from ADP in the presence of a proton gradient across the membrane. The alpha chain is a regulatory subunit. The sequence is that of ATP synthase subunit alpha, chloroplastic from Sorghum bicolor (Sorghum).